A 368-amino-acid polypeptide reads, in one-letter code: Endoglucanase (368 aa).

A signal peptide spans 1–21 (MNVLRSGLVTMLLLAAFSVQA). Glu55 acts as the Proton donor in catalysis. Asp116 acts as the Nucleophile in catalysis.

Belongs to the glycosyl hydrolase 8 (cellulase D) family.

The protein localises to the secreted. The enzyme catalyses Endohydrolysis of (1-&gt;4)-beta-D-glucosidic linkages in cellulose, lichenin and cereal beta-D-glucans.. It participates in glycan metabolism; bacterial cellulose biosynthesis. Functionally, hydrolyzes carboxymethylcellulose. This is Endoglucanase (bcsZ) from Escherichia coli O157:H7.